A 335-amino-acid polypeptide reads, in one-letter code: Glyoxylate reductase (335 aa).

Residues 159–162 (MGRI), 181–183 (SRS), and 240–242 (TGR) each bind NADP(+). Active-site residues include R242 and E271. The active-site Proton donor is H290. Residue 290–292 (HAA) coordinates NADP(+).

The protein belongs to the D-isomer specific 2-hydroxyacid dehydrogenase family. GyaR subfamily. As to quaternary structure, homodimer.

The protein localises to the cytoplasm. The catalysed reaction is glycolate + NAD(+) = glyoxylate + NADH + H(+). The chain is Glyoxylate reductase from Aeropyrum pernix (strain ATCC 700893 / DSM 11879 / JCM 9820 / NBRC 100138 / K1).